Consider the following 101-residue polypeptide: Small ribosomal subunit protein uS14 (101 aa).

The protein belongs to the universal ribosomal protein uS14 family. In terms of assembly, part of the 30S ribosomal subunit. Contacts proteins S3 and S10.

Binds 16S rRNA, required for the assembly of 30S particles and may also be responsible for determining the conformation of the 16S rRNA at the A site. The polypeptide is Small ribosomal subunit protein uS14 (Aliivibrio fischeri (strain MJ11) (Vibrio fischeri)).